The sequence spans 782 residues: Small RNA degrading nuclease 3 (782 aa).

In terms of domain architecture, Exonuclease spans 145 to 296 (MLSIDCEMVT…HDAAAAMKLV (152 aa)). Residues 331 to 410 (AQLFLHKIPH…KKAVLKLSSG (80 aa)) form the RRM 1 domain. Residues 426–464 (PCEISTSERARAEENNVSSKRQKTEDETEETKEATVNQR) form a disordered region. The RRM 2 domain maps to 469–549 (TKLFLHKIPH…KMVVFKLSSG (81 aa)). Residues 563–605 (DSPGEISTTKRARTEESNMSSKRQKTEDESEETKEANAKQREA) are disordered. The stretch at 577-605 (EESNMSSKRQKTEDESEETKEANAKQREA) forms a coiled coil. Residues 595–605 (TKEANAKQREA) are compositionally biased toward basic and acidic residues. One can recognise an RRM 3 domain in the interval 608–688 (TKLLLHKIPL…KMVAFKLSSG (81 aa)). The stretch at 709–779 (ANANHCEDDH…KMKLEKKQSK (71 aa)) forms a coiled coil.

Belongs to the REXO1/REXO3 family. As to quaternary structure, associated with the Mediator complex.

Its subcellular location is the nucleus. Functionally, 3'-5' exonuclease degrading single-stranded small RNAs. The chain is Small RNA degrading nuclease 3 (SDN3) from Arabidopsis thaliana (Mouse-ear cress).